Reading from the N-terminus, the 1185-residue chain is Calmodulin-binding transcription activator homolog 1 (1185 aa).

A DNA-binding region (CG-1) is located at residues 72–200 (AVELFPCFKD…YLNVKTNNKI (129 aa)). Disordered regions lie at residues 252–277 (GVNL…RRNS) and 390–411 (KIRS…VTST). The segment covering 393–411 (SGSQESPMGPPSSSSVTST) has biased composition (low complexity). Positions 418–498 (EMTPSSSSLK…ISTASEFTYE (81 aa)) constitute an IPT/TIG domain. The ANK repeat unit spans residues 616 to 646 (DGSTPLHTACKNSASRIARLIISIDSSAIDV). Residues 957–984 (EAAMVIQRAYRVYRARSTTRRQEDIERR) form the IQ domain. A disordered region spans residues 1121–1185 (CPQTSGDQRN…KPPYGCGTLA (65 aa)). The segment covering 1128–1147 (QRNKRDSDGERKRDAHHDAP) has biased composition (basic and acidic residues).

Belongs to the CAMTA family. As to quaternary structure, may interact with calmodulin. As to expression, expressed broadly in the nervous system.

The protein localises to the nucleus. In terms of biological role, transcription factor. Positively modulates neuronal levels of the ubiquitous Ca2+ sensor calmodulin/cmd-1, probably by direct binding to the cmd-1 promoter, thereby regulating Ca2+ signaling, physiology, and behavior. The sequence is that of Calmodulin-binding transcription activator homolog 1 from Caenorhabditis elegans.